The sequence spans 546 residues: MAAKDVVFGDSARSKMVEGVNILANAVKVTLGPKGRNVVLERSFGGPTVTKDGVSVAKEIELKDKLQNMGAQMVKEVASKTSDNAGDGTTTATVLAQSIVREGMKYVASGMNPMDLKRGIDKAVAAAVEELKKISKPCTTNKEIAQVGSISANSDTSIGDRIAEAMDKVGKEGVITVEDGKSLADELDVVEGMQFDRGYLSPYFINNPEKQVAVLDNPFVLLHDKKVSNIRDLLPVLEQVAKAGRPLLIIAEDIEGEALATLVVNNIRGILKTVAVKAPGFGDRRKAMLEDIAILTGGQVIAEETGLTLEKATLAELGQAKRIEVGKENTTIIDGAGEAVNIEARVKQVRAQIEEATSDYDREKLQERVAKLAGGVAVIKVGAATEVEMKEKKARVEDALHATRAAVEEGIVAGGGVALIRARTAIAALTGANADQNAGIKIVLRAMEEPLRQIVTNGGEEASVVVAAVAAGTGNYGYNAATGEYVDMVEAGVVDPTKVTRTALQNAASVAGLLLTTDAAVAELPKEDAPMPGGMPGGMGGMGMDM.

ATP contacts are provided by residues 30 to 33, Lys51, 87 to 91, Gly415, 479 to 481, and Asp495; these read TLGP, DGTTT, and NAA. Residues 526–546 are disordered; it reads KEDAPMPGGMPGGMGGMGMDM. A compositionally biased stretch (gly residues) spans 534–546; sequence GMPGGMGGMGMDM.

This sequence belongs to the chaperonin (HSP60) family. As to quaternary structure, forms a cylinder of 14 subunits composed of two heptameric rings stacked back-to-back. Interacts with the co-chaperonin GroES.

It localises to the cytoplasm. The catalysed reaction is ATP + H2O + a folded polypeptide = ADP + phosphate + an unfolded polypeptide.. In terms of biological role, together with its co-chaperonin GroES, plays an essential role in assisting protein folding. The GroEL-GroES system forms a nano-cage that allows encapsulation of the non-native substrate proteins and provides a physical environment optimized to promote and accelerate protein folding. The polypeptide is Chaperonin GroEL 2 (Burkholderia lata (strain ATCC 17760 / DSM 23089 / LMG 22485 / NCIMB 9086 / R18194 / 383)).